We begin with the raw amino-acid sequence, 229 residues long: Elongation factor 1-delta 1 (229 aa).

Positions 80 to 109 are disordered; sequence ESTAVPSASTPDVADAKAPAADDDDDDDVD. Residues 100–109 are compositionally biased toward acidic residues; the sequence is ADDDDDDDVD.

This sequence belongs to the EF-1-beta/EF-1-delta family. As to quaternary structure, EF-1 is composed of 4 subunits: alpha, beta (1B-alpha=beta'), delta (1B-beta), and gamma (1B-gamma).

EF-1-beta and EF-1-beta' stimulate the exchange of GDP bound to EF-1-alpha to GTP. This chain is Elongation factor 1-delta 1, found in Oryza sativa subsp. japonica (Rice).